The following is a 257-amino-acid chain: BTB/POZ domain-containing protein kctd15-like (257 aa).

Phosphoserine is present on residues Ser9 and Ser12. One can recognise a BTB domain in the interval 30–100 (APVHIDVGGH…LRTSKLLLPE (71 aa)).

The polypeptide is BTB/POZ domain-containing protein kctd15-like (kctd15l) (Danio rerio (Zebrafish)).